A 165-amino-acid polypeptide reads, in one-letter code: 2-C-methyl-D-erythritol 2,4-cyclodiphosphate synthase (165 aa).

2 residues coordinate a divalent metal cation: D11 and H13. 4-CDP-2-C-methyl-D-erythritol 2-phosphate contacts are provided by residues 11–13 and 40–41; these read DVH and HS. H48 contributes to the a divalent metal cation binding site. Residues 62–64, 67–71, 137–140, F144, and R147 contribute to the 4-CDP-2-C-methyl-D-erythritol 2-phosphate site; these read DIG, FPDTD, and TTSE.

It belongs to the IspF family. As to quaternary structure, homotrimer. The cofactor is a divalent metal cation.

The enzyme catalyses 4-CDP-2-C-methyl-D-erythritol 2-phosphate = 2-C-methyl-D-erythritol 2,4-cyclic diphosphate + CMP. It participates in isoprenoid biosynthesis; isopentenyl diphosphate biosynthesis via DXP pathway; isopentenyl diphosphate from 1-deoxy-D-xylulose 5-phosphate: step 4/6. Functionally, involved in the biosynthesis of isopentenyl diphosphate (IPP) and dimethylallyl diphosphate (DMAPP), two major building blocks of isoprenoid compounds. Catalyzes the conversion of 4-diphosphocytidyl-2-C-methyl-D-erythritol 2-phosphate (CDP-ME2P) to 2-C-methyl-D-erythritol 2,4-cyclodiphosphate (ME-CPP) with a corresponding release of cytidine 5-monophosphate (CMP). This is 2-C-methyl-D-erythritol 2,4-cyclodiphosphate synthase from Rubrobacter xylanophilus (strain DSM 9941 / JCM 11954 / NBRC 16129 / PRD-1).